A 1584-amino-acid polypeptide reads, in one-letter code: Kinesin-like protein unc-104 (1584 aa).

In terms of domain architecture, Kinesin motor spans 3-347; sequence SVKVAVRVRP…LRYADRAKQI (345 aa). Position 93–100 (93–100) interacts with ATP; the sequence is GQTGSGKS. Residues 183–335 are microtubule-binding; it reads VCSYHDICNL…PADINFDETL (153 aa). 3 coiled-coil regions span residues 425-445, 598-652, and 777-797; these read EQKL…LRDM, IDLK…SYIS, and SIEK…TDAE. The segment at 1366–1416 is disordered; sequence IPMNKDPPTGNKAQELSDESGSNSITSPVSDKSLIKSSRSSDLLCRQKSKS. The segment covering 1376 to 1394 has biased composition (polar residues); that stretch reads NKAQELSDESGSNSITSPV. Residues 1395–1409 are compositionally biased toward low complexity; the sequence is SDKSLIKSSRSSDLL. The region spanning 1460-1558 is the PH domain; sequence VVSKKGYMNF…WLYAINPLMA (99 aa).

The protein belongs to the TRAFAC class myosin-kinesin ATPase superfamily. Kinesin family. Unc-104 subfamily. In terms of assembly, interacts with casy-1. Expressed in nerve ring, amphid commissure and ventral nerve cord (at protein level).

Its subcellular location is the cytoplasm. The protein resides in the cytoskeleton. The protein localises to the cell projection. It is found in the axon. Functionally, motor protein involved in microtubule-associated anterograde transport. Regulates the transport of synaptic vesicle precursors in the axon of DA motor neurons. Regulates the polarized sorting of axonal proteins. Essential for the transport of synaptic components during the synaptic remodeling of the DD motor neuron, probably downstream of cdk-5 and/or pct-1/cyy-1 complex. Required for the anterograde transport of neuropeptide-containing dense core vesicles along axons. Involved in necrotic cell death. The chain is Kinesin-like protein unc-104 (unc-104) from Caenorhabditis elegans.